An 885-amino-acid chain; its full sequence is Protein PTHB1 (885 aa).

The segment at 1-406 is seven-bladed beta-propeller; that stretch reads MSLFKARDWW…LQGVWPLTEQ (406 aa). Residues 684 to 764 form an interaction with LZTL1 region; the sequence is RDKTPAPLQH…FLPLQEDTQE (81 aa).

Part of BBSome complex, that contains BBS1, BBS2, BBS4, BBS5, BBS7, BBS8/TTC8, BBS9 and BBIP10. Interacts with LZTL1; the interaction mediates the association of LZTL1 with the BBsome complex and regulates BBSome ciliary trafficking.

The protein localises to the cell projection. The protein resides in the cilium membrane. It localises to the cytoplasm. It is found in the cytoskeleton. Its subcellular location is the microtubule organizing center. The protein localises to the centrosome. The protein resides in the centriolar satellite. Its function is as follows. The BBSome complex is thought to function as a coat complex required for sorting of specific membrane proteins to the primary cilia. The BBSome complex is required for ciliogenesis but is dispensable for centriolar satellite function. This ciliogenic function is mediated in part by the Rab8 GDP/GTP exchange factor, which localizes to the basal body and contacts the BBSome. Rab8(GTP) enters the primary cilium and promotes extension of the ciliary membrane. Firstly the BBSome associates with the ciliary membrane and binds to RAB3IP/Rabin8, the guanosyl exchange factor (GEF) for Rab8 and then the Rab8-GTP localizes to the cilium and promotes docking and fusion of carrier vesicles to the base of the ciliary membrane. Required for proper BBSome complex assembly and its ciliary localization. In Mus musculus (Mouse), this protein is Protein PTHB1 (Bbs9).